The following is a 256-amino-acid chain: Pimeloyl-[acyl-carrier protein] methyl ester esterase (256 aa).

An AB hydrolase-1 domain is found at 15–242 (HLVLLHGWGL…AAHAPFISHP (228 aa)). Residues W22, 82-83 (SL), and 143-147 (FLALQ) contribute to the substrate site. S82 acts as the Nucleophile in catalysis. Active-site residues include D207 and H235. H235 contributes to the substrate binding site.

This sequence belongs to the AB hydrolase superfamily. Carboxylesterase BioH family. As to quaternary structure, monomer.

The protein resides in the cytoplasm. The catalysed reaction is 6-carboxyhexanoyl-[ACP] methyl ester + H2O = 6-carboxyhexanoyl-[ACP] + methanol + H(+). The protein operates within cofactor biosynthesis; biotin biosynthesis. Functionally, the physiological role of BioH is to remove the methyl group introduced by BioC when the pimeloyl moiety is complete. It allows to synthesize pimeloyl-ACP via the fatty acid synthetic pathway through the hydrolysis of the ester bonds of pimeloyl-ACP esters. The chain is Pimeloyl-[acyl-carrier protein] methyl ester esterase from Citrobacter koseri (strain ATCC BAA-895 / CDC 4225-83 / SGSC4696).